A 206-amino-acid polypeptide reads, in one-letter code: Protein FAM228A (206 aa).

It belongs to the FAM228 family.

The chain is Protein FAM228A (FAM228A) from Homo sapiens (Human).